Reading from the N-terminus, the 195-residue chain is dCTP deaminase (195 aa).

Residues 110 to 115 (RSSLAR), Asp-128, 136 to 138 (VLE), Tyr-171, Lys-178, and Gln-182 each bind dCTP. Residue Glu-138 is the Proton donor/acceptor of the active site. The tract at residues 171–195 (YSSRKDAKYKNQQSAVASRIDEDKE) is disordered.

This sequence belongs to the dCTP deaminase family. In terms of assembly, homotrimer.

It carries out the reaction dCTP + H2O + H(+) = dUTP + NH4(+). The protein operates within pyrimidine metabolism; dUMP biosynthesis; dUMP from dCTP (dUTP route): step 1/2. Its function is as follows. Catalyzes the deamination of dCTP to dUTP. This is dCTP deaminase from Haemophilus influenzae (strain ATCC 51907 / DSM 11121 / KW20 / Rd).